Consider the following 640-residue polypeptide: MAPLDLTRGQTDACSTENKDILCRNVLIYGHCRYEDQGCTYNHDQNKNSSQPEAPSKKMFNVDSPSFTPSGQSTVLPKKTTLSSQAASAAPFTPRGGGTPTLQTTAESTMFNPAAIREFTPQNYDLGNNNANGISQENGLYPDPFTMSTMGTALPTAGQYNLPLYGDHSGLAAPGAPFYPPHAAYPTGPIQPPHYHLYQPFGPYRQELQPWQRATYDFFMPQNLREDLQKKQFATLQVIPNSGLPQLEHWHSLVPLDTSNRKNTSCFGYPSWVYKAQNSRNGRHYALRRLEGYRLTNEKAILNVMKDWKKIKNASIVTIHEVFTTREFGDSSLIFAYDFHPLSKTLQEHHFQPIHGNRYRPPPAVPENTIWGYICQIANALKTIHSNRLAARCLEPSKIILTDINRIRLSACAILDVVQFGMNSRSVVELQQEDFVKFGKLILSLATGTLPAHLNNIPAALETLGNKYSANLKSAVNWLLDTSSGETKTIEHFMTGIASQMTTFFDLALQDNDEKLFHLAREVENGRIARSLMKLLTILERGDYDGVPSWSETGDRYQLKLFRDYVFHRVDADGKPNLSIGHMLTCMSKLEAGVDENILLTSRDNETVFVLSYRELRQMYDRAFNELVKASKTGAPGANT.

The C3H1-type zinc-finger motif lies at glutamate 17–asparagine 46. Polar residues-rich tracts occupy residues histidine 43–glutamate 53 and aspartate 63–alanine 87. Residues histidine 43–threonine 101 form a disordered region. Residues glutamine 237–alanine 498 are pseudokinase domain. ATP is bound by residues asparagine 263, arginine 288, aspartate 338–threonine 345, and serine 397–lysine 398. Positions serine 499–threonine 537 form a coiled coil. The tract at residues isoleucine 538 to threonine 640 is knob domain.

This sequence belongs to the protein kinase superfamily. PAN3 family. As to quaternary structure, homodimer. Forms a heterotrimer with a catalytic subunit PAN2 to form the poly(A)-nuclease (PAN) deadenylation complex. Interacts (via PAM-2 motif) with poly(A)-binding protein PAB1 (via PABC domain), conferring substrate specificity of the enzyme complex.

Its subcellular location is the cytoplasm. Regulatory subunit of the poly(A)-nuclease (PAN) deadenylation complex, one of two cytoplasmic mRNA deadenylases involved in mRNA turnover. PAN specifically shortens poly(A) tails of RNA and the activity is stimulated by poly(A)-binding protein PAB1. PAN deadenylation is followed by rapid degradation of the shortened mRNA tails by the CCR4-NOT complex. Deadenylated mRNAs are then degraded by two alternative mechanisms, namely exosome-mediated 3'-5' exonucleolytic degradation, or deadenylation-dependent mRNA decaping and subsequent 5'-3' exonucleolytic degradation by XRN1. May also be involved in post-transcriptional maturation of mRNA poly(A) tails. PAN3 acts as a positive regulator for PAN activity, recruiting the catalytic subunit PAN2 to mRNA via its interaction with RNA and with PAB1. This is PAN2-PAN3 deadenylation complex subunit PAN3 from Chaetomium thermophilum (strain DSM 1495 / CBS 144.50 / IMI 039719) (Thermochaetoides thermophila).